The chain runs to 379 residues: 2-dehydropantoate 2-reductase (379 aa).

Residues 13-18 (GLGAMG) and N119 each bind NADP(+). N119 is a binding site for substrate. The active-site Proton donor is the K224. The substrate site is built by N228, N232, and S316. E328 serves as a coordination point for NADP(+).

Belongs to the ketopantoate reductase family.

It catalyses the reaction (R)-pantoate + NADP(+) = 2-dehydropantoate + NADPH + H(+). It participates in cofactor biosynthesis; (R)-pantothenate biosynthesis; (R)-pantoate from 3-methyl-2-oxobutanoate: step 2/2. Its function is as follows. Catalyzes the NADPH-dependent reduction of ketopantoate into pantoic acid. This is 2-dehydropantoate 2-reductase (PAN5) from Saccharomyces cerevisiae (strain ATCC 204508 / S288c) (Baker's yeast).